The primary structure comprises 278 residues: Energy-coupling factor transporter ATP-binding protein EcfA1 (278 aa).

The region spanning 5–240 (IEVRNLKYKY…EDLEELGLDQ (236 aa)) is the ABC transporter domain. Residue 40–47 (GHNGSGKS) participates in ATP binding.

This sequence belongs to the ABC transporter superfamily. Energy-coupling factor EcfA family. Forms a stable energy-coupling factor (ECF) transporter complex composed of 2 membrane-embedded substrate-binding proteins (S component), 2 ATP-binding proteins (A component) and 2 transmembrane proteins (T component).

The protein localises to the cell membrane. Its function is as follows. ATP-binding (A) component of a common energy-coupling factor (ECF) ABC-transporter complex. Unlike classic ABC transporters this ECF transporter provides the energy necessary to transport a number of different substrates. The sequence is that of Energy-coupling factor transporter ATP-binding protein EcfA1 from Streptococcus sanguinis (strain SK36).